A 339-amino-acid chain; its full sequence is Purple acid phosphatase 4 (339 aa).

The signal sequence occupies residues 1–31 (MSSKFDIGSLSIVMTLLICFLLLSLAPKLEA). Residue aspartate 53 coordinates Fe cation. N-linked (GlcNAc...) asparagine glycosylation is present at asparagine 61. Fe cation-binding residues include aspartate 86 and tyrosine 89. Position 86 (aspartate 86) interacts with Zn(2+). Zn(2+) contacts are provided by asparagine 124 and histidine 218. Residue histidine 227 is the Proton donor of the active site. Histidine 253 provides a ligand contact to Zn(2+). Substrate is bound at residue 253 to 255 (HDH). Histidine 255 is a Fe cation binding site. An N-linked (GlcNAc...) asparagine glycan is attached at asparagine 284.

It belongs to the metallophosphoesterase superfamily. Purple acid phosphatase family. Homodimer. Requires Fe cation as cofactor. It depends on Zn(2+) as a cofactor. Expressed in roots, stems, leaves, flowers and siliques.

It is found in the secreted. It catalyses the reaction a phosphate monoester + H2O = an alcohol + phosphate. The protein is Purple acid phosphatase 4 (PAP4) of Arabidopsis thaliana (Mouse-ear cress).